Reading from the N-terminus, the 130-residue chain is S-adenosylmethionine decarboxylase proenzyme (130 aa).

Residue serine 78 is the Schiff-base intermediate with substrate; via pyruvic acid of the active site. Residue serine 78 is modified to Pyruvic acid (Ser); by autocatalysis. Catalysis depends on histidine 83, which acts as the Proton acceptor; for processing activity. Residue cysteine 98 is the Proton donor; for catalytic activity of the active site.

Belongs to the prokaryotic AdoMetDC family. Type 1 subfamily. In terms of assembly, heterotetramer of two alpha and two beta chains arranged as a dimer of alpha/beta heterodimers. The cofactor is pyruvate. Is synthesized initially as an inactive proenzyme. Formation of the active enzyme involves a self-maturation process in which the active site pyruvoyl group is generated from an internal serine residue via an autocatalytic post-translational modification. Two non-identical subunits are generated from the proenzyme in this reaction, and the pyruvate is formed at the N-terminus of the alpha chain, which is derived from the carboxyl end of the proenzyme. The post-translation cleavage follows an unusual pathway, termed non-hydrolytic serinolysis, in which the side chain hydroxyl group of the serine supplies its oxygen atom to form the C-terminus of the beta chain, while the remainder of the serine residue undergoes an oxidative deamination to produce ammonia and the pyruvoyl group blocking the N-terminus of the alpha chain.

It carries out the reaction S-adenosyl-L-methionine + H(+) = S-adenosyl 3-(methylsulfanyl)propylamine + CO2. It participates in amine and polyamine biosynthesis; S-adenosylmethioninamine biosynthesis; S-adenosylmethioninamine from S-adenosyl-L-methionine: step 1/1. In terms of biological role, catalyzes the decarboxylation of S-adenosylmethionine to S-adenosylmethioninamine (dcAdoMet), the propylamine donor required for the synthesis of the polyamines spermine and spermidine from the diamine putrescine. The protein is S-adenosylmethionine decarboxylase proenzyme of Aeropyrum pernix (strain ATCC 700893 / DSM 11879 / JCM 9820 / NBRC 100138 / K1).